A 304-amino-acid polypeptide reads, in one-letter code: Aspartate carbamoyltransferase catalytic subunit (304 aa).

The carbamoyl phosphate site is built by Arg-49 and Thr-50. Lys-77 lines the L-aspartate pocket. The carbamoyl phosphate site is built by Arg-99, His-127, and Gln-130. Residues Arg-160 and Arg-211 each coordinate L-aspartate. Ala-252 and Pro-253 together coordinate carbamoyl phosphate.

Belongs to the aspartate/ornithine carbamoyltransferase superfamily. ATCase family. In terms of assembly, heterododecamer (2C3:3R2) of six catalytic PyrB chains organized as two trimers (C3), and six regulatory PyrI chains organized as three dimers (R2).

It carries out the reaction carbamoyl phosphate + L-aspartate = N-carbamoyl-L-aspartate + phosphate + H(+). It participates in pyrimidine metabolism; UMP biosynthesis via de novo pathway; (S)-dihydroorotate from bicarbonate: step 2/3. Catalyzes the condensation of carbamoyl phosphate and aspartate to form carbamoyl aspartate and inorganic phosphate, the committed step in the de novo pyrimidine nucleotide biosynthesis pathway. The polypeptide is Aspartate carbamoyltransferase catalytic subunit (Bacillus cereus (strain G9842)).